The sequence spans 545 residues: Calcium-dependent protein kinase 6 (545 aa).

G2 is lipidated: N-myristoyl glycine. Residues C34–S43 show a composition bias toward low complexity. Positions C34–S58 are disordered. The region spanning Y74 to V332 is the Protein kinase domain. ATP contacts are provided by residues L80–T88 and K103. D198 serves as the catalytic Proton acceptor. The segment at A338–I368 is autoinhibitory domain. 4 EF-hand domains span residues E375 to N410, L411 to L446, E447 to A482, and I486 to D516. Residues D388, D390, S392, E399, D424, D426, S428, T430, E435, D460, D462, S464, Y466, E471, D494, D496, D498, R500, and E505 each contribute to the Ca(2+) site. The interval G526 to R545 is disordered. Low complexity predominate over residues P528–R545.

This sequence belongs to the protein kinase superfamily. Ser/Thr protein kinase family. CDPK subfamily.

It is found in the membrane. It carries out the reaction L-seryl-[protein] + ATP = O-phospho-L-seryl-[protein] + ADP + H(+). The catalysed reaction is L-threonyl-[protein] + ATP = O-phospho-L-threonyl-[protein] + ADP + H(+). With respect to regulation, activated by calcium. Autophosphorylation may play an important role in the regulation of the kinase activity. Functionally, may play a role in signal transduction pathways that involve calcium as a second messenger. This Oryza sativa subsp. japonica (Rice) protein is Calcium-dependent protein kinase 6.